A 202-amino-acid chain; its full sequence is Syndecan-4 (202 aa).

The signal sequence occupies residues Met-1–Gly-23. Topologically, residues Glu-24 to Glu-149 are extracellular. 2 disordered regions span residues Tyr-42–Pro-76 and Leu-89–Thr-138. Ser-44 is a glycosylation site (O-linked (Xyl...) (glycosaminoglycan) serine). Residues Pro-48–Phe-62 are compositionally biased toward acidic residues. 2 O-linked (Xyl...) (glycosaminoglycan) serine glycosylation sites follow: Ser-65 and Ser-67. A compositionally biased stretch (basic and acidic residues) spans Ser-105 to Pro-121. A helical membrane pass occupies residues Val-150–Tyr-174. Residues Arg-175–Ala-202 lie on the Cytoplasmic side of the membrane.

The protein belongs to the syndecan proteoglycan family. Homodimer. Interacts with CDCP1 and SDCBP. Interacts (via its cytoplasmic domain) with GIPC (via its PDZ domain). Interacts (via its cytoplasmic domain) with NUDT16L1. Interacts with DNM2; this interaction is markedly enhanced at focal ahesion site upon induction of focal adhesions and stress-fiber formation. Shedding is enhanced by a number of factors such as heparanase, thrombin or EGF. Also by stress and wound healing. PMA-mediated shedding is inhibited by TIMP3. In terms of processing, O-glycosylated; contains both chondroitin sulfate and heparan sulfate. Ser-44, Ser-65 and Ser-67 can all be modified by either chondroitin sulfate or heparan sulfate, and the protein exists in forms that contain only chondroitin sulfate, only heparan sulfate and both chondroitin sulfate and heparan sulfate.

The protein localises to the membrane. The protein resides in the secreted. In terms of biological role, cell surface proteoglycan which regulates exosome biogenesis in concert with SDCBP and PDCD6IP. This chain is Syndecan-4, found in Rattus norvegicus (Rat).